We begin with the raw amino-acid sequence, 278 residues long: Large ribosomal subunit protein uL2 (278 aa).

Basic residues-rich tracts occupy residues 210–219 (RSRWLGKRPQ) and 252–263 (KKSRGIKTRNSK). A disordered region spans residues 210–278 (RSRWLGKRPQ…LIIRHRKGNK (69 aa)).

It belongs to the universal ribosomal protein uL2 family. In terms of assembly, part of the 50S ribosomal subunit. Forms a bridge to the 30S subunit in the 70S ribosome.

Its function is as follows. One of the primary rRNA binding proteins. Required for association of the 30S and 50S subunits to form the 70S ribosome, for tRNA binding and peptide bond formation. It has been suggested to have peptidyltransferase activity; this is somewhat controversial. Makes several contacts with the 16S rRNA in the 70S ribosome. This Lactobacillus johnsonii (strain CNCM I-12250 / La1 / NCC 533) protein is Large ribosomal subunit protein uL2.